Reading from the N-terminus, the 468-residue chain is Hydroxymethylglutaryl-CoA lyase, mitochondrial (468 aa).

The region spanning Val168 to Ile435 is the Pyruvate carboxyltransferase domain. Substrate is bound at residue Arg176. Residues Asp177, His368, and His370 each contribute to the a divalent metal cation site. Cys401 is an active-site residue. Residue Asn410 coordinates a divalent metal cation.

The protein belongs to the HMG-CoA lyase family. Homodimer. The cofactor is a divalent metal cation.

The protein localises to the mitochondrion matrix. It catalyses the reaction (3S)-3-hydroxy-3-methylglutaryl-CoA = acetoacetate + acetyl-CoA. It functions in the pathway metabolic intermediate metabolism; (S)-3-hydroxy-3-methylglutaryl-CoA degradation; acetoacetate from (S)-3-hydroxy-3-methylglutaryl-CoA: step 1/1. Involved in the catabolism of branched amino acids such as leucine. The protein is Hydroxymethylglutaryl-CoA lyase, mitochondrial (HMGCL) of Arabidopsis thaliana (Mouse-ear cress).